The chain runs to 499 residues: Probable dipeptidase B (499 aa).

Cys-26 is an active-site residue.

It belongs to the peptidase C69 family.

The catalysed reaction is an L-aminoacyl-L-amino acid + H2O = 2 an L-alpha-amino acid. The polypeptide is Probable dipeptidase B (pepDB) (Streptococcus pyogenes serotype M6 (strain ATCC BAA-946 / MGAS10394)).